The sequence spans 705 residues: MESEAIQEDLQNLDVELKDVQGQISALIEHQDRLYERKSELKTLLKALAASGSPVASSGGSSAIENWSETFEWDSRADDVRFNVFGISKYRANQKEIINAIMTGRDVLVIMAAGGGKSLCYQLPAMLRGGTTLVVSPLLSLIQDQVMGLAALGISAYMLTSTSGKENEKFVYKALEKGEDDLKILYVTPEKVSKSKRFMSKLEKCHNAGRLSLISIDEAHCCSQWGHDFRPDYKNLSILKTQFPKVPMVALTATATQKVQNDLIEMLHIPKCVKFVSSVNRPNLFYSVREKSAVGKLVVDEIAEFIRESYSNNESGIVYCFSRKECEQIAGDLRERGISADYYHADMDANMREKVHMRWSKNKLQVIVGTVAFGMGINKPDVRFVIHHSLSKSMETYYQESGRAGRDGLPSECILFFRSADVPRQSSMVFYEYSGLQNLYDIVRYCQSKTKCRRSAFFRHFGEPSQDCNGMCDNCALSSEVKEVDVSDLSKLVVSMVQETQAKDQRVTMLQLGDKLRNKHKDLIAELKRDEVEHLVIKLIVDSVLKEEFQHTPYSTNAYVTMGPLANQLLQGRKTIKMETSSRQTKKLKRSITFSGLELKLDELRKEISAADGSILPHTVLSTQQIGSISSQKPVSLQELESIIGKLKTEKYGDRILEEVMRHEAVSEQLVEDPTKEETCKSRLRKRAKTQKDVVLVESSGEEEA.

Residues 1–30 adopt a coiled-coil conformation; that stretch reads MESEAIQEDLQNLDVELKDVQGQISALIEH. Positions 98–273 constitute a Helicase ATP-binding domain; that stretch reads INAIMTGRDV…IEMLHIPKCV (176 aa). 111–118 contacts ATP; it reads MAAGGGKS. Residues 217-220 carry the DEAH box motif; that stretch reads DEAH. The Helicase C-terminal domain occupies 298–450; sequence VVDEIAEFIR…DIVRYCQSKT (153 aa). One can recognise an HRDC domain in the interval 591 to 670; that stretch reads SITFSGLELK…MRHEAVSEQL (80 aa). Residues 668 to 705 are disordered; it reads EQLVEDPTKEETCKSRLRKRAKTQKDVVLVESSGEEEA.

It belongs to the helicase family. RecQ subfamily. In terms of assembly, interacts with WEX. Requires Mg(2+) as cofactor. Mn(2+) serves as cofactor. In terms of tissue distribution, expressed in shoots and flowers. Expressed in young leaves, inflorescences, roots, shoot apical meristem, young siliques, and mature green siliques.

The protein resides in the nucleus. It carries out the reaction Couples ATP hydrolysis with the unwinding of duplex DNA by translocating in the 3'-5' direction.. The catalysed reaction is ATP + H2O = ADP + phosphate + H(+). 3'-5' DNA helicase that may play a role in the repair of DNA. Its DNA unwinding activity in vitro is dependent on magnesium, and ATP or dATP. Can use GTP/dGTP, CTP/dCTP or UTP/dUTP as nucleotide cofactors. Catalyzes Holliday junction branch migration and replication fork regression. Disrupts D-loop structures. Unwinds G-quadruplex DNA, found in telomeric DNA. In Arabidopsis thaliana (Mouse-ear cress), this protein is ATP-dependent DNA helicase Q-like 2.